Reading from the N-terminus, the 261-residue chain is Transcription antitermination protein NusB (261 aa).

The interval 168–261 (ARVEDQPSDD…DLHKKDTTDD (94 aa)) is disordered. Polar residues predominate over residues 217–228 (VDTTSGNASDPE). Residues 242-261 (PTSKDHELATDLHKKDTTDD) show a composition bias toward basic and acidic residues.

It belongs to the NusB family.

Functionally, involved in transcription antitermination. Required for transcription of ribosomal RNA (rRNA) genes. Binds specifically to the boxA antiterminator sequence of the ribosomal RNA (rrn) operons. The sequence is that of Transcription antitermination protein NusB from Cutibacterium acnes (strain DSM 16379 / KPA171202) (Propionibacterium acnes).